The chain runs to 387 residues: Flap endonuclease 1 (387 aa).

Positions 1 to 104 (MGILGLSKLI…GELAKRAERR (104 aa)) are N-domain. Mg(2+) is bound at residue Asp-34. The DNA site is built by Arg-47 and Arg-70. Mg(2+)-binding residues include Asp-86, Glu-158, Glu-160, Asp-179, and Asp-181. An I-domain region spans residues 122-253 (GIEKFNRRLV…KRAIELINNY (132 aa)). Glu-158 lines the DNA pocket. The DNA site is built by Gly-231 and Asp-233. Residue Asp-233 coordinates Mg(2+). The interval 336–344 (TQVRLDSFF) is interaction with PCNA. The interval 345–387 (KTLPSTPNATNAAKRKAEEAKKSANNKKAKTSGGGGGRGRRPK) is disordered.

It belongs to the XPG/RAD2 endonuclease family. FEN1 subfamily. As to quaternary structure, interacts with PCNA. Three molecules of FEN1 bind to one PCNA trimer with each molecule binding to one PCNA monomer. PCNA stimulates the nuclease activity without altering cleavage specificity. It depends on Mg(2+) as a cofactor. In terms of processing, phosphorylated. Phosphorylation upon DNA damage induces relocalization to the nuclear plasma.

Its subcellular location is the nucleus. The protein localises to the nucleolus. It is found in the nucleoplasm. It localises to the mitochondrion. Functionally, structure-specific nuclease with 5'-flap endonuclease and 5'-3' exonuclease activities involved in DNA replication and repair. During DNA replication, cleaves the 5'-overhanging flap structure that is generated by displacement synthesis when DNA polymerase encounters the 5'-end of a downstream Okazaki fragment. It enters the flap from the 5'-end and then tracks to cleave the flap base, leaving a nick for ligation. Also involved in the long patch base excision repair (LP-BER) pathway, by cleaving within the apurinic/apyrimidinic (AP) site-terminated flap. Acts as a genome stabilization factor that prevents flaps from equilibrating into structures that lead to duplications and deletions. Also possesses 5'-3' exonuclease activity on nicked or gapped double-stranded DNA, and exhibits RNase H activity. Also involved in replication and repair of rDNA and in repairing mitochondrial DNA. This Drosophila yakuba (Fruit fly) protein is Flap endonuclease 1.